The following is a 286-amino-acid chain: Acetyl-coenzyme A carboxylase carboxyl transferase subunit beta (286 aa).

The CoA carboxyltransferase N-terminal domain occupies 28-286 (LMQKCSNCKK…KMHMDGRQLK (259 aa)). Cysteine 32, cysteine 35, cysteine 51, and cysteine 54 together coordinate Zn(2+). The segment at 32-54 (CSNCKKIYYRKEMVKALQVCPNC) adopts a C4-type zinc-finger fold.

Belongs to the AccD/PCCB family. Acetyl-CoA carboxylase is a heterohexamer composed of biotin carboxyl carrier protein (AccB), biotin carboxylase (AccC) and two subunits each of ACCase subunit alpha (AccA) and ACCase subunit beta (AccD). It depends on Zn(2+) as a cofactor.

It localises to the cytoplasm. It catalyses the reaction N(6)-carboxybiotinyl-L-lysyl-[protein] + acetyl-CoA = N(6)-biotinyl-L-lysyl-[protein] + malonyl-CoA. The protein operates within lipid metabolism; malonyl-CoA biosynthesis; malonyl-CoA from acetyl-CoA: step 1/1. Component of the acetyl coenzyme A carboxylase (ACC) complex. Biotin carboxylase (BC) catalyzes the carboxylation of biotin on its carrier protein (BCCP) and then the CO(2) group is transferred by the transcarboxylase to acetyl-CoA to form malonyl-CoA. This is Acetyl-coenzyme A carboxylase carboxyl transferase subunit beta from Oceanobacillus iheyensis (strain DSM 14371 / CIP 107618 / JCM 11309 / KCTC 3954 / HTE831).